The primary structure comprises 100 residues: Mitochondrial import inner membrane translocase subunit Tim10 B (100 aa).

The Twin CX3C motif signature appears at 25–49 (CFQRCVPSLHHRALDAEEEACLHSC). Disulfide bonds link Cys-25/Cys-49 and Cys-29/Cys-45.

It belongs to the small Tim family. In terms of assembly, component of the TIM22 complex, which core is composed of TIMM22, associated with TIMM10 (TIMM10A and/or TIMM10B), TIMM9, AGK and TIMM29.

It localises to the mitochondrion inner membrane. In terms of biological role, component of the TIM22 complex, a complex that mediates the import and insertion of multi-pass transmembrane proteins into the mitochondrial inner membrane. The TIM22 complex forms a twin-pore translocase that uses the membrane potential as the external driving force. In the TIM22 complex, it may act as a docking point for the soluble 70 kDa complex that guides the target proteins in transit through the aqueous mitochondrial intermembrane space. The polypeptide is Mitochondrial import inner membrane translocase subunit Tim10 B (Timm10b) (Mus musculus (Mouse)).